Reading from the N-terminus, the 359-residue chain is MSLLFLVLLSPFPCVLGLPFYNGFYYSNDLSGRTLGNGYGEGLFNGVKLVVETTEESLFSHQGASVTLPCHYHYEPALASPRHVRVKWWKLSENGAPEQDVLVVIGQRHRSFGDYQGRVQLRQDKQQEVSLELRDLRLEDSGRYRCEVIDGLEDESGLVELELRGVVFPYQSREGRYQLNFHEAQQACQEQGAMVATFEQLFRAWEEGLDWCNAGWLQDASVQYPIVLPRQPCGGLGLAPGVRSYGQRHHRLHRYDVFCFAAALKGRVYYLENPKKLTLLEAREACQEDGAQISTVGQLFAAWKFRGLDRCDAGWLADGSARYPIVHPRLNCGPPEPGVRTFGFPDPHTRYGVYCYVQH.

The signal sequence occupies residues M1–G17. Residues K48 to R164 enclose the Ig-like V-type domain. Cystine bridges form between C70-C146, C188-C259, C212-C233, C286-C355, and C311-C332. Link domains are found at residues V166–A261 and G266–V357.

Belongs to the HAPLN family.

It is found in the secreted. The protein localises to the extracellular space. It localises to the extracellular matrix. Functionally, may function in hyaluronic acid binding. This chain is Hyaluronan and proteoglycan link protein 3 (Hapln3), found in Mus musculus (Mouse).